We begin with the raw amino-acid sequence, 347 residues long: Spermidine/putrescine import ATP-binding protein PotA (347 aa).

The 231-residue stretch at I6–I236 folds into the ABC transporter domain. Residue G38–T45 participates in ATP binding.

It belongs to the ABC transporter superfamily. Spermidine/putrescine importer (TC 3.A.1.11.1) family. As to quaternary structure, the complex is composed of two ATP-binding proteins (PotA), two transmembrane proteins (PotB and PotC) and a solute-binding protein (PotD).

The protein resides in the cell membrane. The enzyme catalyses ATP + H2O + polyamine-[polyamine-binding protein]Side 1 = ADP + phosphate + polyamineSide 2 + [polyamine-binding protein]Side 1.. In terms of biological role, part of the ABC transporter complex PotABCD involved in spermidine/putrescine import. Responsible for energy coupling to the transport system. The protein is Spermidine/putrescine import ATP-binding protein PotA of Clostridioides difficile (strain 630) (Peptoclostridium difficile).